The chain runs to 341 residues: HTH-type transcriptional repressor PurR (341 aa).

The HTH lacI-type domain maps to 2 to 56 (ATIKDVAKRAGVSTTTVSHVINKTRFVAEETKAAVGAAIKELHYSPSAVARSLKV). Residues 4-23 (IKDVAKRAGVSTTTVSHVIN) constitute a DNA-binding region (H-T-H motif). A DNA-binding region spans residues 48–56 (SAVARSLKV). Residues Tyr-73, Arg-190, Thr-192, Phe-221, and Asp-275 each coordinate hypoxanthine.

In terms of assembly, homodimer.

Its pathway is purine metabolism; purine nucleotide biosynthesis [regulation]. Is the main repressor of the genes involved in the de novo synthesis of purine nucleotides, regulating purB, purC, purEK, purF, purHD, purL, purMN and guaBA expression. PurR is allosterically activated to bind its cognate DNA by binding the purine corepressors, hypoxanthine or guanine, thereby effecting transcription repression. The sequence is that of HTH-type transcriptional repressor PurR from Serratia proteamaculans (strain 568).